A 410-amino-acid chain; its full sequence is METSSPRPPRPSSNPGLSLDARLGVDTRLWAKVLFTALYALIWALGAAGNALSAHVVLKARAGRAGRLRHHVLSLALAGLLLLLVGVPVELYSFVWFHYPWVFGDLGCRGYYFVHELCAYATVLSVAGLSAERCLAVCQPLRARSLLTPRRTRWLVALSWAASLGLALPMAVIMGQKHELETADGEPEPASRVCTVLVSRTALQVFIQVNVLVSFVLPLALTAFLNGVTVSHLLALCSQVPSTSTPGSSTPSRLELLSEEGLLSFIVWKKTFIQGGQVSLVRHKDVRRIRSLQRSVQVLRAIVVMYVICWLPYHARRLMYCYVPDDAWTDPLYNFYHYFYMVTNTLFYVSSAVTPLLYNAVSSSFRKLFLEAVSSLCGEHHPMKRLPPKPQSPTLMDTASGFGDPPETRT.

At Met-1–Lys-32 the chain is on the extracellular side. A helical transmembrane segment spans residues Val-33–His-55. The Cytoplasmic portion of the chain corresponds to Val-56–Arg-64. A helical membrane pass occupies residues Ala-65–Val-87. Residues Pro-88 to Arg-109 are Extracellular-facing. Cysteines 108 and 194 form a disulfide. The helical transmembrane segment at Gly-110–Ala-131 threads the bilayer. Over Glu-132–Trp-154 the chain is Cytoplasmic. A helical transmembrane segment spans residues Leu-155–Gln-176. The Extracellular segment spans residues Lys-177 to Leu-217. Residues Pro-218–Cys-237 traverse the membrane as a helical segment. Residues Ser-238–Gln-297 are Cytoplasmic-facing. A helical membrane pass occupies residues Val-298–Leu-318. The Extracellular portion of the chain corresponds to Met-319–His-337. A helical transmembrane segment spans residues Tyr-338 to Tyr-358. The Cytoplasmic portion of the chain corresponds to Asn-359 to Thr-410. Cys-377 carries S-palmitoyl cysteine lipidation. Residues His-381–Thr-410 are disordered.

It belongs to the G-protein coupled receptor 1 family. Neurotensin receptor subfamily. NTSR2 sub-subfamily. Expressed in prostate (at protein level).

The protein localises to the cell membrane. In terms of biological role, receptor for the tridecapeptide neurotensin. It is associated with G proteins that activate a phosphatidylinositol-calcium second messenger system. In Homo sapiens (Human), this protein is Neurotensin receptor type 2 (NTSR2).